Here is a 1196-residue protein sequence, read N- to C-terminus: [NU+] prion formation protein 1 (1196 aa).

Disordered stretches follow at residues 1–49 (MPPK…KSSY) and 103–125 (TYKQ…STTS). Composition is skewed to polar residues over residues 39–49 (GSNNASKKSSY) and 103–113 (TYKQSAVTPNQ). Residues 114–125 (SGTPTPSASTTS) are compositionally biased toward low complexity. Residue S443 is modified to Phosphoserine. ABC transporter domains lie at 570 to 786 (IEIV…YYTL) and 812 to 1129 (AKMT…ADAV). Residues 604–611 (GRNGAGKS) and 846–853 (GPNGAGKS) each bind ATP. In terms of domain architecture, Chromo spans 942–1003 (RAIEAIVGRQ…HEASREGLGY (62 aa)). Disordered stretches follow at residues 1137-1166 (AKPS…EKKL) and 1177-1196 (EWLS…DEED). Position 1191 is a phosphothreonine (T1191).

It belongs to the ABC transporter superfamily. ABCF family. EF3 subfamily.

It is found in the cytoplasm. The protein localises to the nucleus. Its function is as follows. May be involved in the mRNA export process. Forms the [NU+] prion and induces [PSI+] prion formation. The chain is [NU+] prion formation protein 1 (NEW1) from Saccharomyces cerevisiae (strain ATCC 204508 / S288c) (Baker's yeast).